A 360-amino-acid polypeptide reads, in one-letter code: D-xylose 1-dehydrogenase [NADP(+)] (360 aa).

The protein belongs to the Gfo/Idh/MocA family. Homotretramer.

It carries out the reaction D-xylofuranose + NADP(+) = D-xylono-1,4-lactone + NADPH + H(+). Its function is as follows. NADP-dependent D-xylose dehydrogenase involved in the degradation of D-xylose, a major component of hemicelluloses such as xylan. In addition to D-xylose, oxidizes D-ribose at similar kinetic constants, whereas D-glucose is oxidized with about 70-fold lower catalytic efficiency. The sequence is that of D-xylose 1-dehydrogenase [NADP(+)] (gfo6) from Haloarcula marismortui (strain ATCC 43049 / DSM 3752 / JCM 8966 / VKM B-1809) (Halobacterium marismortui).